The chain runs to 416 residues: Putative UV-damage repair protein UvrX (416 aa).

In terms of domain architecture, UmuC spans I12–G196. The Mg(2+) site is built by D16 and D115. Residue E116 is part of the active site.

It belongs to the DNA polymerase type-Y family. Requires Mg(2+) as cofactor.

This is Putative UV-damage repair protein UvrX (uvrX) from Bacillus subtilis (strain 168).